The sequence spans 200 residues: MAKFTQHTGLVVPLDAANVDTDAIIPKQFLQKVTRTGFGKHLFNDWRFLDDAGQQPNPEFVLNKPRYKGASILLARENFGCGSSREHAPWALTDYGFRVVIAPSFADIFYGNSLNNQLLPVKLSEQDVETLFQLVAANEGIEFEVDLENQTVKAGGKSYPFDIDSFRRHCMINGLDSIGLTLQHEADISRYEAQQPAFLN.

Belongs to the LeuD family. LeuD type 1 subfamily. Heterodimer of LeuC and LeuD.

The enzyme catalyses (2R,3S)-3-isopropylmalate = (2S)-2-isopropylmalate. It participates in amino-acid biosynthesis; L-leucine biosynthesis; L-leucine from 3-methyl-2-oxobutanoate: step 2/4. Catalyzes the isomerization between 2-isopropylmalate and 3-isopropylmalate, via the formation of 2-isopropylmaleate. This is 3-isopropylmalate dehydratase small subunit from Serratia proteamaculans (strain 568).